The sequence spans 467 residues: 5'-nucleotidase domain-containing protein 1 (467 aa).

D16 (nucleophile) is an active-site residue. Residues D16 and D18 each coordinate Mg(2+). Residue D18 is the Proton donor of the active site. K181 is modified (N6-acetyllysine). Mg(2+) is bound at residue D323.

Belongs to the 5'(3')-deoxyribonucleotidase family.

This chain is 5'-nucleotidase domain-containing protein 1 (Nt5dc1), found in Mus musculus (Mouse).